Here is a 654-residue protein sequence, read N- to C-terminus: tRNA 5-methylaminomethyl-2-thiouridine biosynthesis bifunctional protein MnmC (654 aa).

The tRNA (mnm(5)s(2)U34)-methyltransferase stretch occupies residues M1–V236. The FAD-dependent cmnm(5)s(2)U34 oxidoreductase stretch occupies residues I262–K654.

This sequence in the N-terminal section; belongs to the methyltransferase superfamily. tRNA (mnm(5)s(2)U34)-methyltransferase family. The protein in the C-terminal section; belongs to the DAO family. Requires FAD as cofactor.

Its subcellular location is the cytoplasm. The enzyme catalyses 5-aminomethyl-2-thiouridine(34) in tRNA + S-adenosyl-L-methionine = 5-methylaminomethyl-2-thiouridine(34) in tRNA + S-adenosyl-L-homocysteine + H(+). In terms of biological role, catalyzes the last two steps in the biosynthesis of 5-methylaminomethyl-2-thiouridine (mnm(5)s(2)U) at the wobble position (U34) in tRNA. Catalyzes the FAD-dependent demodification of cmnm(5)s(2)U34 to nm(5)s(2)U34, followed by the transfer of a methyl group from S-adenosyl-L-methionine to nm(5)s(2)U34, to form mnm(5)s(2)U34. In Pseudomonas putida (strain ATCC 47054 / DSM 6125 / CFBP 8728 / NCIMB 11950 / KT2440), this protein is tRNA 5-methylaminomethyl-2-thiouridine biosynthesis bifunctional protein MnmC.